The sequence spans 277 residues: Alpha-ketoglutarate-dependent dioxygenase tstK (277 aa).

Belongs to the asaB hydroxylase/desaturase family.

It carries out the reaction 2-[(1R,8S,14R,15R)-11-hydroxy-14,15-bis[(6E)-oct-6-en-1-yl]-3,5,9-trioxo-4,10-dioxatetracyclo[9.4.0.0(2,6).0(8,12)]pentadeca-2(6),12-dien-8-yl]acetate + 3 2-oxoglutarate + 3 O2 = phomoidride A + 3 succinate + 3 CO2 + H2O. Alpha-ketoglutarate-dependent dioxygenase; part of the gene cluster that mediates the biosynthesis of the antihypercholesterolemic agents phomoidrides which are dimeric anhydrides. Within the pathway, tstK is responsible for the iterative oxidation necessary to convert prephomoidride to phomoidride A. The pathway begins with the highly reducing polyketide synthase tstiA that catalyzes the formation of a C12-fatty acyl-ACP, starting from one acetate and 5 malonate units. The hydrolase tstM is involved in the release of the C12-fatty acyl chain from phiA. The alkylcitrate synthase (ACS) tstJ and the alkylcitrate dehydratase (ACDH) tstI then give rise to decarboxylated monomeric anhydrides by coupling the C12-fatty acyl chain with oxalacetic acid. The cyclase tstC is responsible for the dimerization of the monomeric anhydrides which leads to the production of prephomoidride that contains the characteristic bicyclo[4.3.1]deca-1,6-diene system of phomoidrides. Iterative oxidation catalyzed by the alpha-ketoglutarate-dependent dioxygenase tstK produced then phomoidride A. Finally, the methyltransferase tstE converts phomoidride A to phomoidride B via an acetalization reaction. The phosphatidylethanolamine-binding protein tstB and tstN are not essential for dimerization and their functions have still to be determined. The polypeptide is Alpha-ketoglutarate-dependent dioxygenase tstK (Talaromyces stipitatus (strain ATCC 10500 / CBS 375.48 / QM 6759 / NRRL 1006) (Penicillium stipitatum)).